Consider the following 944-residue polypeptide: Leucine--tRNA ligase 2 (944 aa).

A 'HIGH' region motif is present at residues 36 to 46 (PYPNSPWHIGH). A 'KMSKS' region motif is present at residues 623 to 627 (KMSKS). ATP is bound at residue lysine 626.

It belongs to the class-I aminoacyl-tRNA synthetase family.

The protein localises to the cytoplasm. The catalysed reaction is tRNA(Leu) + L-leucine + ATP = L-leucyl-tRNA(Leu) + AMP + diphosphate. This is Leucine--tRNA ligase 2 from Saccharolobus solfataricus (strain ATCC 35092 / DSM 1617 / JCM 11322 / P2) (Sulfolobus solfataricus).